We begin with the raw amino-acid sequence, 104 residues long: L-rhamnose mutarotase (104 aa).

Tyr-18 serves as a coordination point for substrate. The Proton donor role is filled by His-22. Substrate-binding positions include Tyr-41 and 76 to 77; that span reads WW.

The protein belongs to the rhamnose mutarotase family. Homodimer.

It localises to the cytoplasm. The enzyme catalyses alpha-L-rhamnose = beta-L-rhamnose. The protein operates within carbohydrate metabolism; L-rhamnose metabolism. In terms of biological role, involved in the anomeric conversion of L-rhamnose. In Shigella dysenteriae serotype 1 (strain Sd197), this protein is L-rhamnose mutarotase.